The chain runs to 426 residues: Enolase (426 aa).

Gln-163 is a (2R)-2-phosphoglycerate binding site. Catalysis depends on Glu-205, which acts as the Proton donor. Asp-242, Glu-286, and Asp-313 together coordinate Mg(2+). 4 residues coordinate (2R)-2-phosphoglycerate: Lys-338, Arg-367, Ser-368, and Lys-389. Lys-338 serves as the catalytic Proton acceptor.

The protein belongs to the enolase family. The cofactor is Mg(2+).

It localises to the cytoplasm. It is found in the secreted. The protein localises to the cell surface. The enzyme catalyses (2R)-2-phosphoglycerate = phosphoenolpyruvate + H2O. It participates in carbohydrate degradation; glycolysis; pyruvate from D-glyceraldehyde 3-phosphate: step 4/5. In terms of biological role, catalyzes the reversible conversion of 2-phosphoglycerate (2-PG) into phosphoenolpyruvate (PEP). It is essential for the degradation of carbohydrates via glycolysis. The sequence is that of Enolase from Helicobacter pylori (strain P12).